Consider the following 863-residue polypeptide: Leucine--tRNA ligase (863 aa).

The short motif at 42–52 (PYPSGRLHMGH) is the 'HIGH' region element. A 'KMSKS' region motif is present at residues 622 to 626 (KMSKS). Lys625 is an ATP binding site.

Belongs to the class-I aminoacyl-tRNA synthetase family.

The protein resides in the cytoplasm. It carries out the reaction tRNA(Leu) + L-leucine + ATP = L-leucyl-tRNA(Leu) + AMP + diphosphate. This Shewanella loihica (strain ATCC BAA-1088 / PV-4) protein is Leucine--tRNA ligase.